The chain runs to 115 residues: MRIYVNEIKVTEDSINCYTEQSTEGLQEAGQMLVDSDNYSFAYILDDGQSYSYLIFVQETWSMLYENKGKKLIINDELELKQFENEFNYILDNIQGNSNYGKEFVSVVENTFELD.

Belongs to the UPF0738 family.

The protein is UPF0738 protein SSP1780 of Staphylococcus saprophyticus subsp. saprophyticus (strain ATCC 15305 / DSM 20229 / NCIMB 8711 / NCTC 7292 / S-41).